We begin with the raw amino-acid sequence, 801 residues long: METMLKSNPQMQQRNNHSGQETSLWSSGFGMKMEAITPFLGKYRPFMGRCCQTCTPKSWESLFHRSIMDLGFCNVILVKEENTRFRGWLVRRLCYFLWSLEQHIPTSSDASQMIMENTGVQNILLGKVPGAAGEGQAPDLVKKEVQRILGHIQTTPRPFLLRLFSWALLWFLNRLFLNVQLHKGQMKMVHKAAQEGSPLVFLSTHKSLLDGFLLPFVLFSQGLGVLRVALDSRTCSPALRALLRKLGGLFLPPEANLSLDSSEGILARAVVRATVEQLLTSGQPLLIFLEEAPGYPGPRLSALGQAWLGLVVQAVQAGIVPDATLVPVATAYDLVPDAPCNMTHDLAPLGLWTGALAIFRRLCNCWGCNRRVCVRVHLAQPFSLQEYTINARSCWGSRQTLEHLLQPIVLGECSVVPDTEKEQEWTPPTSLLLALKEEDQLLVRRLSRHVLSASVASSAVMSTAIMATLLLLKHQKGVVLSQLLGEFSWLTEETLLRGFDVGFSGQLRCLAQHTLSLLRAHVVLLRVHQGDLVVVPRPGPGLTHLARLSMELLPTFLSEAVGACAVRGLLAGRVPPEGPWELQGIELLSQNELYRQILLLLHLLPQDLLLPQPCQSSYCYCQEVLDRLIQCGLLVAEETPGSRPACDTGRQHLSAKLLWKPSGDFTDSESDDFEEPGGRCFRLSQQSRCPDFFLFLCRLLSPILKAFAQAATFLHLGQLPDSEVGYSEKLLQFLQACAQEEGIFECADPNLAISAIWTFKDLGVLQQIPSPTGPQLHLSPTFASRDNQDKLEQFIRQFICS.

A disordered region spans residues 1–24 (METMLKSNPQMQQRNNHSGQETSL). At 1–305 (METMLKSNPQ…PGPRLSALGQ (305 aa)) the chain is on the cytoplasmic side. The segment at 180–290 (QLHKGQMKMV…SGQPLLIFLE (111 aa)) is acyltransferase. The HXXXXD motif motif lies at 205-210 (HKSLLD). Residues 306–332 (AWLGLVVQAVQAGIVPDATLVPVATAY) traverse the membrane as a helical segment. The Mitochondrial intermembrane portion of the chain corresponds to 333-449 (DLVPDAPCNM…QLLVRRLSRH (117 aa)). A helical transmembrane segment spans residues 450-472 (VLSASVASSAVMSTAIMATLLLL). The Cytoplasmic segment spans residues 473 to 795 (KHQKGVVLSQ…DNQDKLEQFI (323 aa)).

This sequence belongs to the GPAT/DAPAT family. As to quaternary structure, interacts with PIWIL2. As to expression, expressed in spermatocytes and spermatides.

Its subcellular location is the mitochondrion outer membrane. The catalysed reaction is sn-glycerol 3-phosphate + an acyl-CoA = a 1-acyl-sn-glycero-3-phosphate + CoA. The enzyme catalyses a 1-acyl-sn-glycero-3-phosphate + an acyl-CoA = a 1,2-diacyl-sn-glycero-3-phosphate + CoA. It carries out the reaction 1-(9Z-octadecenoyl)-sn-glycero-3-phosphate + (9Z)-octadecenoyl-CoA = 1,2-di-(9Z-octadecenoyl)-sn-glycero-3-phosphate + CoA. It catalyses the reaction 1-(9Z-octadecenoyl)-sn-glycero-3-phosphate + (5Z,8Z,11Z,14Z)-eicosatetraenoyl-CoA = 1-(9Z)-octadecenoyl-2-(5Z,8Z,11Z,14Z)-eicosatetraenoyl-sn-glycero-3-phosphate + CoA. The catalysed reaction is (5Z,8Z,11Z,14Z)-eicosatetraenoyl-CoA + sn-glycerol 3-phosphate = 1-(5Z,8Z,11Z,14Z-eicosatetraenoyl)-sn-glycero-3-phosphate + CoA. It functions in the pathway phospholipid metabolism; CDP-diacylglycerol biosynthesis; CDP-diacylglycerol from sn-glycerol 3-phosphate: step 1/3. With respect to regulation, inhibited by N-ethylmaleimide (NEM). Functionally, transfers an acyl-group from acyl-ACP to the sn-1 position of glycerol-3-phosphate producing a lysophosphatidic acid (LPA), an essential step for the triacylglycerol (TAG) and glycerophospholipids. In vitro also transfers an acyl-group from acyl-ACP to the LPA producing a phosphatidic acid (PA). Prefers arachidonoyl-CoA as the acyl donor. Required for primary processing step during piRNA biosynthesis. Molecular mechanisms by which it promotes piRNA biosynthesis are unclear and do not involve its acyltransferase activity. The protein is Glycerol-3-phosphate acyltransferase 2, mitochondrial of Rattus norvegicus (Rat).